Here is a 499-residue protein sequence, read N- to C-terminus: Uridine-cytidine kinase A (499 aa).

Residues 1–44 (MSDNSTTKVTTNDSPSLTTTTSTTTAPTTTTTTTTTPTHNHDTT) are disordered. Residues 10 to 38 (TTNDSPSLTTTTSTTTAPTTTTTTTTTPT) are compositionally biased toward low complexity. Residue 78–85 (GGSASGKT) coordinates ATP.

The protein belongs to the uridine kinase family.

The catalysed reaction is uridine + ATP = UMP + ADP + H(+). It carries out the reaction cytidine + ATP = CMP + ADP + H(+). The protein operates within pyrimidine metabolism; CTP biosynthesis via salvage pathway; CTP from cytidine: step 1/3. It functions in the pathway pyrimidine metabolism; UMP biosynthesis via salvage pathway; UMP from uridine: step 1/1. In terms of biological role, catalyzes the conversion of uridine into uridine monophosphate and cytidine into cytidine monophosphate in the pyrimidine salvage pathway. This is Uridine-cytidine kinase A (udkA) from Dictyostelium discoideum (Social amoeba).